A 367-amino-acid polypeptide reads, in one-letter code: Nociceptin receptor (367 aa).

Residues 1–45 (MESLFPAPFWEVLYGSHFQGNLSLLNETVPHHLLLNASHSAFLPL) are Extracellular-facing. Asparagine 21, asparagine 26, and asparagine 36 each carry an N-linked (GlcNAc...) asparagine glycan. A helical membrane pass occupies residues 46–71 (GLKVTIVGLYLAVCIGGLLGNCLVMY). At 72-84 (VILRHTKMKTATN) the chain is on the cytoplasmic side. The chain crosses the membrane as a helical span at residues 85–106 (IYIFNLALADTLVLLTLPFQGT). Topologically, residues 107-121 (DILLGFWPFGNALCK) are extracellular. Cysteine 120 and cysteine 197 are disulfide-bonded. A helical transmembrane segment spans residues 122 to 143 (TVIAIDYYNMFTSTFTLTAMSV). Residues 144–162 (DRYVAICHPIRALDVRTSS) lie on the Cytoplasmic side of the membrane. The helical transmembrane segment at 163–185 (KAQAVNVAIWALASVVGVPVAIM) threads the bilayer. Over 186 to 208 (GSAQVEDEEIECLVEIPAPQDYW) the chain is Extracellular. A helical transmembrane segment spans residues 209–233 (GPVFAICIFLFSFIIPVLIISVCYS). At 234–261 (LMIRRLRGVRLLSGSREKDRNLRRITRL) the chain is on the cytoplasmic side. A helical membrane pass occupies residues 262–282 (VLVVVAVFVGCWTPVQVFVLV). Topologically, residues 283–297 (QGLGVQPGSETAVAI) are extracellular. The chain crosses the membrane as a helical span at residues 298 to 319 (LRFCTALGYVNSCLNPILYAFL). Topologically, residues 320-367 (DENFKACFRKFCCASALHREMQVSDRVRSIAKDVGLGCKTSETVPRPA) are cytoplasmic. A lipid anchor (S-palmitoyl cysteine) is attached at cysteine 331.

Belongs to the G-protein coupled receptor 1 family. In terms of processing, phosphorylation at Ser-360 requires GRK3. In terms of tissue distribution, in the brain, isoform KOR3 and isoform KOR3C are most abundant in hypothalamus and periaqueductal gray. Isoform KOR3A is highly expressed in cortex, striatum and brainstem. Isoform KOR3D is highly expressed in cerebellum, hypothalamus and brainstem. Detected in spleen lymphocytes.

It localises to the cell membrane. Its subcellular location is the cytoplasmic vesicle. Its function is as follows. G-protein coupled opioid receptor that functions as a receptor for the endogenous neuropeptide nociceptin. Ligand binding causes a conformation change that triggers signaling via guanine nucleotide-binding proteins (G proteins) and modulates the activity of down-stream effectors. Signaling via G proteins mediates inhibition of adenylate cyclase activity and calcium channel activity. Arrestins modulate signaling via G proteins and mediate the activation of alternative signaling pathways that lead to the activation of MAP kinases. Plays a role in modulating nociception and the perception of pain. Plays a role in the regulation of locomotor activity by the neuropeptide nociceptin. This is Nociceptin receptor (Oprl1) from Mus musculus (Mouse).